Reading from the N-terminus, the 133-residue chain is MSQDFSREKRLLTPRHFKAVFDSPTGKVPGKNLLILARENGLDHPRLGLVIGKKSVKLAVQRNRLKRLMRDSFRLNQQLLAGLDIVIVARKGLGEIENPELHQHFGKLWKRLARSRPTPAVTANSAGVDSQDA.

The protein belongs to the RnpA family. As to quaternary structure, consists of a catalytic RNA component (M1 or rnpB) and a protein subunit.

The catalysed reaction is Endonucleolytic cleavage of RNA, removing 5'-extranucleotides from tRNA precursor.. RNaseP catalyzes the removal of the 5'-leader sequence from pre-tRNA to produce the mature 5'-terminus. It can also cleave other RNA substrates such as 4.5S RNA. The protein component plays an auxiliary but essential role in vivo by binding to the 5'-leader sequence and broadening the substrate specificity of the ribozyme. The chain is Ribonuclease P protein component from Pseudomonas putida (strain ATCC 47054 / DSM 6125 / CFBP 8728 / NCIMB 11950 / KT2440).